The sequence spans 185 residues: Peptidoglycan-recognition protein SC1a (185 aa).

A signal peptide spans 1-21 (MVSKVALLLAVLVCSQYMAQG). Residues 46 to 170 (SYAIIHHTAG…RQVSATECPG (125 aa)) enclose the N-acetylmuramoyl-L-alanine amidase domain. His51 contributes to the Zn(2+) binding site. Cys58 and Cys64 are disulfide-bonded. The Zn(2+) site is built by His160 and Cys168.

The protein belongs to the N-acetylmuramoyl-L-alanine amidase 2 family. Requires Zn(2+) as cofactor.

It is found in the secreted. The enzyme catalyses Hydrolyzes the link between N-acetylmuramoyl residues and L-amino acid residues in certain cell-wall glycopeptides.. In terms of biological role, N-acetylmuramyl-L-alanine amidase involved in innate immunity by degrading bacterial peptidoglycans (PGN). Plays a scavenger role by digesting biologically active PGN into biologically inactive fragments. Has no direct bacteriolytic activity. The chain is Peptidoglycan-recognition protein SC1a from Drosophila melanogaster (Fruit fly).